The sequence spans 426 residues: Enolase (426 aa).

Q163 lines the (2R)-2-phosphoglycerate pocket. The active-site Proton donor is the E205. Mg(2+) contacts are provided by D242, E283, and D310. K335, R364, S365, and K386 together coordinate (2R)-2-phosphoglycerate. K335 serves as the catalytic Proton acceptor.

Belongs to the enolase family. Mg(2+) serves as cofactor.

The protein resides in the cytoplasm. The protein localises to the secreted. Its subcellular location is the cell surface. The enzyme catalyses (2R)-2-phosphoglycerate = phosphoenolpyruvate + H2O. The protein operates within carbohydrate degradation; glycolysis; pyruvate from D-glyceraldehyde 3-phosphate: step 4/5. Its function is as follows. Catalyzes the reversible conversion of 2-phosphoglycerate (2-PG) into phosphoenolpyruvate (PEP). It is essential for the degradation of carbohydrates via glycolysis. The polypeptide is Enolase (Pseudarthrobacter chlorophenolicus (strain ATCC 700700 / DSM 12829 / CIP 107037 / JCM 12360 / KCTC 9906 / NCIMB 13794 / A6) (Arthrobacter chlorophenolicus)).